We begin with the raw amino-acid sequence, 1008 residues long: Translation initiation factor IF-2 (1008 aa).

Disordered stretches follow at residues Ala-113–Val-136, Asp-153–Pro-235, and Gly-253–Asp-405. Composition is skewed to basic and acidic residues over residues Asp-153–Pro-180 and Pro-189–Thr-213. Low complexity-rich tracts occupy residues Gly-294–Gln-329 and Gly-342–Pro-358. Residues Ala-365 to Lys-381 show a composition bias toward basic and acidic residues. One can recognise a tr-type G domain in the interval Asp-507–Lys-677. Residues Gly-516–Thr-523 form a G1 region. Position 516–523 (Gly-516–Thr-523) interacts with GTP. Residues Gly-541–His-545 are G2. Residues Asp-563 to Gly-566 form a G3 region. Residues Asp-563–His-567 and Asn-617–Asp-620 contribute to the GTP site. The interval Asn-617–Asp-620 is G4. A G5 region spans residues Ser-653 to Lys-655.

Belongs to the TRAFAC class translation factor GTPase superfamily. Classic translation factor GTPase family. IF-2 subfamily.

It localises to the cytoplasm. One of the essential components for the initiation of protein synthesis. Protects formylmethionyl-tRNA from spontaneous hydrolysis and promotes its binding to the 30S ribosomal subunits. Also involved in the hydrolysis of GTP during the formation of the 70S ribosomal complex. In Cytophaga hutchinsonii (strain ATCC 33406 / DSM 1761 / CIP 103989 / NBRC 15051 / NCIMB 9469 / D465), this protein is Translation initiation factor IF-2.